A 164-amino-acid chain; its full sequence is Cell division protein SepF (164 aa).

Residues 29 to 57 are disordered; the sequence is INKGRGASQQEYDEYYEDSTPTVTQKEDP.

This sequence belongs to the SepF family. Homodimer. Interacts with FtsZ.

Its subcellular location is the cytoplasm. Its function is as follows. Cell division protein that is part of the divisome complex and is recruited early to the Z-ring. Probably stimulates Z-ring formation, perhaps through the cross-linking of FtsZ protofilaments. Its function overlaps with FtsA. In Exiguobacterium sibiricum (strain DSM 17290 / CCUG 55495 / CIP 109462 / JCM 13490 / 255-15), this protein is Cell division protein SepF.